The chain runs to 152 residues: Transcriptional repressor NrdR (152 aa).

A zinc finger lies at 3-34 (CPYCQHPDSDVIDTRKLHNGETIRRRRKCEAC). One can recognise an ATP-cone domain in the interval 49 to 139 (ITVVKKNGER…VYRSFADIGK (91 aa)).

This sequence belongs to the NrdR family. It depends on Zn(2+) as a cofactor.

Functionally, negatively regulates transcription of bacterial ribonucleotide reductase nrd genes and operons by binding to NrdR-boxes. The protein is Transcriptional repressor NrdR of Roseiflexus sp. (strain RS-1).